Here is a 1123-residue protein sequence, read N- to C-terminus: RNA-binding protein 6 (1123 aa).

2 disordered regions span residues 1 to 391 and 413 to 454; these read MWGD…EGGL and LPGS…EEKP. S17 is subject to Phosphoserine. A Glycyl lysine isopeptide (Lys-Gly) (interchain with G-Cter in SUMO2) cross-link involves residue K36. A compositionally biased stretch (basic and acidic residues) spans 79 to 97; that stretch reads DGPHGDYRGGEGPGHDFRG. The segment covering 98 to 114 has biased composition (low complexity); it reads GDFSSSDFQSRDSSQLD. Basic and acidic residues-rich tracts occupy residues 115–131 and 145–237; these read FRGR…REGP and YRGR…DFRG. S240 is modified (phosphoserine). Basic and acidic residues-rich tracts occupy residues 245 to 286 and 301 to 323; these read LDFR…REMP and QDRE…HTIE. Residue K331 forms a Glycyl lysine isopeptide (Lys-Gly) (interchain with G-Cter in SUMO2) linkage. Positions 332 to 354 are enriched in basic and acidic residues; that stretch reads GEFEHSETREGETQGVAFEHESP. T344 is subject to Phosphothreonine. The segment covering 356 to 365 has biased composition (polar residues); the sequence is DFQNSQSPVQ. 2 positions are modified to phosphoserine: S360 and S362. Basic and acidic residues-rich tracts occupy residues 366–391 and 431–454; these read DQDK…EGGL and KTAR…EEKP. Glycyl lysine isopeptide (Lys-Gly) (interchain with G-Cter in SUMO2) cross-links involve residues K386, K453, K469, and K569. One can recognise an RRM domain in the interval 456-536; it reads RLIRLSGVPE…KEVTLEYVSS (81 aa). 3 disordered regions span residues 574–654, 741–787, and 827–948; these read TYPQ…QDGE, KRRN…QSSS, and EEEI…EEDK. Composition is skewed to basic and acidic residues over residues 597-654 and 742-754; these read PADK…QDGE and RRND…DHMH. Residues 772-787 are compositionally biased toward polar residues; sequence SDWSSDTNRQGQQSSS. The span at 843–860 shows a compositional bias: basic and acidic residues; sequence SKKEMSKRDGKEKKDRGV. Residues K871, K879, and K887 each participate in a glycyl lysine isopeptide (Lys-Gly) (interchain with G-Cter in SUMO2) cross-link. S891 bears the Phosphoserine mark. Residues 910–922 show a composition bias toward acidic residues; sequence GDSDYEEEEEEEQ. Basic and acidic residues predominate over residues 934–948; sequence QKREEQTKKENEEDK. Glycyl lysine isopeptide (Lys-Gly) (interchain with G-Cter in SUMO2) cross-links involve residues K935, K948, K991, and K1019. Basic and acidic residues predominate over residues 1004–1051; the sequence is EREGKFKGRGNDRREKLQSFDSPERKRIKYSRETDSDRKLVDKEDIDT. Residues 1004 to 1106 form a disordered region; sequence EREGKFKGRG…RTSKRQSNET (103 aa). Residues S1022 and S1025 each carry the phosphoserine modification. Residues K1042, K1046, and K1066 each participate in a glycyl lysine isopeptide (Lys-Gly) (interchain with G-Cter in SUMO2) cross-link. The G-patch domain maps to 1051-1097; that stretch reads TSSKGGCVQQATGWRKGTGLGYGHPGLASSEEAEGRMRGPSVGASGR.

May interact with FAM168B. As to expression, ubiquitous in adults.

It is found in the nucleus. In terms of biological role, specifically binds poly(G) RNA homopolymers in vitro. This is RNA-binding protein 6 (RBM6) from Homo sapiens (Human).